The primary structure comprises 485 residues: Cyclic GMP-AMP synthase-like receptor (485 aa).

ATP contacts are provided by residues Ser-70 and 82-84 (EYD). The Mg(2+) site is built by Glu-82, Asp-84, and Asp-204. GTP contacts are provided by residues Asp-204 and 247–254 (RLSFYEQE). Lys-271 and Lys-274 together coordinate ATP. Mn(2+) is bound by residues Ile-298 and Asp-304.

This sequence belongs to the mab-21 family. Requires Mg(2+) as cofactor. The cofactor is Mn(2+).

It catalyses the reaction GTP + ATP = 2',3'-cGAMP + 2 diphosphate. The catalysed reaction is GTP + ATP = pppGp(2'-5')A + diphosphate. The enzyme catalyses pppGp(2'-5')A = 2',3'-cGAMP + diphosphate. In terms of biological role, nucleotidyltransferase that catalyzes the formation of cyclic GMP-AMP (2',3'-cGAMP) from ATP and GTP and plays a key role in innate immunity. Directly binds some unknown ligand, activating the nucleotidyltransferase activity, leading to synthesis of 2',3'-cGAMP, a second messenger that binds to and activates Sting, thereby triggering the immune response via activation of the NF-kappa-B transcription factor. This is Cyclic GMP-AMP synthase-like receptor from Trichogramma pretiosum (Parasitoid wasp).